A 1031-amino-acid chain; its full sequence is Zinc finger protein 445 (1031 aa).

The disordered stretch occupies residues 1 to 43 (MPPGRWHAAYPAQAQSSRERGRLQTVKKEEEDESYTPVQAARP). Over residues 17-29 (SRERGRLQTVKKE) the composition is skewed to basic and acidic residues. K28 participates in a covalent cross-link: Glycyl lysine isopeptide (Lys-Gly) (interchain with G-Cter in SUMO1). Residues 55-137 (RQLFRQLRYH…ALLEELQRDL (83 aa)) enclose the SCAN box domain. The 71-residue stretch at 234–304 (MTFKDVEVTF…NMQAAQPKGN (71 aa)) folds into the KRAB domain. Glycyl lysine isopeptide (Lys-Gly) (interchain with G-Cter in SUMO2) cross-links involve residues K317, K374, K375, and K399. 3 C2H2-type zinc fingers span residues 485 to 507 (FKCS…QRLH), 513 to 535 (FKCR…EKIH), and 541 to 563 (YKCD…RETH). K567 participates in a covalent cross-link: Glycyl lysine isopeptide (Lys-Gly) (interchain with G-Cter in SUMO2). 2 C2H2-type zinc fingers span residues 597 to 619 (FDCS…QRIH) and 625 to 647 (YKCT…MRLH). A Glycyl lysine isopeptide (Lys-Gly) (interchain with G-Cter in SUMO2) cross-link involves residue K654. C2H2-type zinc fingers lie at residues 681 to 703 (FLCQ…QRIH) and 709 to 731 (YQCS…KKKH). Residues K736 and K758 each participate in a glycyl lysine isopeptide (Lys-Gly) (interchain with G-Cter in SUMO2) cross-link. C2H2-type zinc fingers lie at residues 762 to 784 (YKCS…QRVH), 790 to 812 (YKCR…QRIH), 840 to 862 (FWCQ…KGIH), 868 to 890 (YKCN…QRIH), and 896 to 918 (FKCQ…QRKH). The disordered stretch occupies residues 911-939 (LSSHQRKHTRAAQAERSPPARSSSQDTKL). Residues K938, K956, and K975 each participate in a glycyl lysine isopeptide (Lys-Gly) (interchain with G-Cter in SUMO2) cross-link. C2H2-type zinc fingers lie at residues 978–1000 (HKCS…KRFH) and 1006–1028 (FKCS…MKNH).

Belongs to the krueppel C2H2-type zinc-finger protein family.

It localises to the nucleus. Its function is as follows. Transcription regulator required to maintain maternal and paternal gene imprinting, a process by which gene expression is restricted in a parent of origin-specific manner by epigenetic modification of genomic DNA and chromatin, including DNA methylation. Acts by controlling DNA methylation during the earliest multicellular stages of development at multiple imprinting control regions (ICRs). Acts together with ZFP57, but seems to be the major factor in human early embryonic imprinting maintenance. In contrast, in mice, ZFP57 plays the predominant role in imprinting maintenance. This is Zinc finger protein 445 from Homo sapiens (Human).